The sequence spans 184 residues: Putative manganese efflux pump MntP (184 aa).

The next 6 membrane-spanning stretches (helical) occupy residues 12–32 (SIMAFALGMDAFSVGLGMGMI), 39–59 (IIYIGLVIGIFHMFMPLFGML), 63–83 (LLSGWLGLLATYIGGALLLVL), 99–119 (FIAPVGAGLVLFATSVSLDSF), 132–152 (VWMTILLFGFFSMILTWLGLL), and 164–184 (YSGALGGIILLAFGIKLLFPL).

It belongs to the MntP (TC 9.B.29) family.

It localises to the cell membrane. In terms of biological role, probably functions as a manganese efflux pump. The protein is Putative manganese efflux pump MntP of Bacillus pumilus (strain SAFR-032).